The chain runs to 638 residues: Protein disulfide-isomerase A4 (638 aa).

A signal peptide spans 1–20 (MKLRKAWLLVLLLALTQLLA). 2 Thioredoxin domains span residues 21–162 (AASA…EVSQ) and 162–294 (QPDW…EFLK). Residues 24 to 50 (AGDAHEDTSDTENATEEEEEEDDDDLE) form a disordered region. Residues 32–50 (SDTENATEEEEEEDDDDLE) are compositionally biased toward acidic residues. Residue N36 is glycosylated (N-linked (GlcNAc...) asparagine). The CXXC signature appears at 84 to 87 (CGHC). Disulfide bonds link C84–C87 and C199–C202. N6-acetyllysine is present on K359. Residues 498–629 (FKKGKLKPVI…LSKFIDEHAT (132 aa)) form the Thioredoxin 3 domain. The CXXC signature appears at 548 to 551 (CGHC). An intrachain disulfide couples C548 to C551. A Prevents secretion from ER motif is present at residues 635–638 (KEEL).

Belongs to the protein disulfide isomerase family. As to quaternary structure, part of a large chaperone multiprotein complex comprising DNAJB11, HSP90B1, HSPA5, HYOU, PDIA2, PDIA4, PDIA6, PPIB, SDF2L1, UGGT1 and very small amounts of ERP29, but not, or at very low levels, CALR nor CANX. Component of a complex containing at least CRELD2, MANF, MATN3 and PDIA4.

The protein localises to the endoplasmic reticulum lumen. It localises to the melanosome. It carries out the reaction Catalyzes the rearrangement of -S-S- bonds in proteins.. The sequence is that of Protein disulfide-isomerase A4 (Pdia4) from Mus musculus (Mouse).